Reading from the N-terminus, the 116-residue chain is Endocuticle structural glycoprotein SgAbd-4 (116 aa).

Pyrrolidone carboxylic acid is present on glutamine 1. The Chitin-binding type R&amp;R domain occupies 20–92; it reads DGSYQWNYET…PQGAHFPTPP (73 aa). Threonine 90 and threonine 107 each carry an O-linked (HexNAc...) threonine glycan. O-linked (HexNAc...) serine glycosylation is present at serine 110. Threonine 111 carries an O-linked (HexNAc...) threonine glycan. A Proline amide modification is found at proline 116.

Functionally, component of the abdominal endocuticle. The protein is Endocuticle structural glycoprotein SgAbd-4 of Schistocerca gregaria (Desert locust).